Here is a 467-residue protein sequence, read N- to C-terminus: tRNA dimethylallyltransferase (467 aa).

The transit peptide at 1–47 (MASVAAARAVPVGSGLRGLQRTLPLVVILGATGTGKSTLALQLGQRL) directs the protein to the mitochondrion. 32 to 37 (TGTGKS) is a binding site for dimethylallyl diphosphate. 2 interaction with substrate tRNA regions span residues 55–58 (DSMQ) and 183–187 (RKVAR). Residues 221–230 (FSNPCILWLH) form a core aggregation region region. The tract at residues 233 to 255 (QAVLDERLDKRVDDMLAAGLLEE) is interaction with isopentenylpyrophosphate transferase. 2 interaction with substrate tRNA regions span residues 281–283 (QSI) and 313–331 (ALKQVTKRYARKQNRWVKN). Residues 395-425 (HLCDLCDRIIIGDREWAAHIKSKSHLNQLKK) form a Matrin-type zinc finger. The disordered stretch occupies residues 429–467 (LDSDAVNTIESQSVSPDHNKEPKEKGSPGQNDQELKCSV). Residues 433-444 (AVNTIESQSVSP) show a composition bias toward polar residues. The residue at position 443 (S443) is a Phosphoserine. Residues 445–454 (DHNKEPKEKG) show a composition bias toward basic and acidic residues. At S455 the chain carries Phosphoserine.

It belongs to the IPP transferase family.

The protein localises to the mitochondrion. It is found in the cytoplasm. The catalysed reaction is adenosine(37) in tRNA + dimethylallyl diphosphate = N(6)-dimethylallyladenosine(37) in tRNA + diphosphate. Functionally, catalyzes the transfer of a dimethylallyl group onto the adenine at position 37 of both cytosolic and mitochondrial tRNAs, leading to the formation of N6-(dimethylallyl)adenosine (i6A37). Mediates modification of a limited subset of tRNAs: tRNA(Ser)(AGA), tRNA(Ser)(CGA), tRNA(Ser)(UGA), as well as partial modification of the selenocysteine tRNA(Ser)(UCA). TRIT1 is therefore required for selenoprotein expression. In Homo sapiens (Human), this protein is tRNA dimethylallyltransferase (TRIT1).